Reading from the N-terminus, the 343-residue chain is 3-oxopimeloyl-[acyl-carrier-protein] synthase (343 aa).

Active-site residues include Cys132 and His272. Positions 273 to 277 are ACP-binding; that stretch reads QANHR. Residue Asn302 is part of the active site.

Belongs to the thiolase-like superfamily. BioZ family.

It carries out the reaction malonyl-[ACP] + an acyl-CoA + H(+) = a 3-oxoacyl-[ACP] + CO2 + CoA. The catalysed reaction is glutaryl-CoA + malonyl-[ACP] + H(+) = 3-oxo-6-carboxyhexanoyl-[ACP] + CO2 + CoA. The protein operates within cofactor biosynthesis; biotin biosynthesis. Functionally, involved in the formation of the biotin precursor pimeloyl-ACP. Catalyzes the condensation of glutaryl-CoA, an intermediate in lysine degradation, with malonyl-ACP to produce 3-oxopimeloyl-ACP. The chain is 3-oxopimeloyl-[acyl-carrier-protein] synthase from Rhodothermus marinus (strain ATCC 43812 / DSM 4252 / R-10) (Rhodothermus obamensis).